The primary structure comprises 191 residues: Cell division protein SepF (191 aa).

Residues 21–96 (EVEEPAVASV…NQQPAQEKTT (76 aa)) form a disordered region. The segment covering 25-56 (PAVASVKRQQDAAQPASQQQKAQSHQYHQSAS) has biased composition (low complexity). 2 stretches are compositionally biased toward polar residues: residues 57–69 (RPSQ…GQNR) and 86–95 (HNQQPAQEKT).

The protein belongs to the SepF family. As to quaternary structure, homodimer. Interacts with FtsZ.

The protein resides in the cytoplasm. Functionally, cell division protein that is part of the divisome complex and is recruited early to the Z-ring. Probably stimulates Z-ring formation, perhaps through the cross-linking of FtsZ protofilaments. Its function overlaps with FtsA. The protein is Cell division protein SepF of Streptococcus mutans serotype c (strain ATCC 700610 / UA159).